Reading from the N-terminus, the 351-residue chain is uncharacterized protein (351 aa).

This is an uncharacterized protein from Schizosaccharomyces pombe (strain 972 / ATCC 24843) (Fission yeast).